A 303-amino-acid polypeptide reads, in one-letter code: Secreted mono- and diacylglycerol lipase LIP4 (303 aa).

Residues 1–16 (MHFLAFLLCLIPLALC) form the signal peptide. A disulfide bond links Cys-54 and Cys-293. The Nucleophile role is filled by Ser-167. Asp-224 is an active-site residue.

This sequence belongs to the AB hydrolase superfamily. Lipase family. Class 3 subfamily.

It is found in the secreted. It catalyses the reaction a monoacylglycerol + H2O = glycerol + a fatty acid + H(+). It carries out the reaction a diacylglycerol + H2O = a monoacylglycerol + a fatty acid + H(+). Its function is as follows. Secreted lipase involved in Dandruff and seborrheic dermatitis (D/SD) probably via lipase-mediated breakdown of sebaceous lipids and release of irritating free fatty acids. Shows activity against monoglyceride and diglyceride substrates. Due to an absence of fatty acid synthase genes in Malassezia species, secretory lipases are essential for the yeast to generate free fatty acids from degradation of sebum and assimilate them as lipid sources for growth. Plays an essential role at the pathogen-host interface during disease progression. The polypeptide is Secreted mono- and diacylglycerol lipase LIP4 (Malassezia restricta (strain ATCC 96810 / NBRC 103918 / CBS 7877) (Seborrheic dermatitis infection agent)).